The following is a 449-amino-acid chain: Tubulin alpha-1C chain (449 aa).

Residues 1-4 carry the MREC motif motif; sequence MREC. Residue glutamine 11 participates in GTP binding. Lysine 40 carries the N6-acetyllysine modification. Glutamate 71, serine 140, glycine 144, threonine 145, threonine 179, asparagine 206, and asparagine 228 together coordinate GTP. A Mg(2+)-binding site is contributed by glutamate 71. Glutamate 254 is a catalytic residue. A 3'-nitrotyrosine modification is found at tyrosine 282. Position 432 is a phosphotyrosine (tyrosine 432). Position 439 is a phosphoserine (serine 439). Tyrosine 449 is subject to 3'-nitrotyrosine.

The protein belongs to the tubulin family. In terms of assembly, dimer of alpha and beta chains. A typical microtubule is a hollow water-filled tube with an outer diameter of 25 nm and an inner diameter of 15 nM. Alpha-beta heterodimers associate head-to-tail to form protofilaments running lengthwise along the microtubule wall with the beta-tubulin subunit facing the microtubule plus end conferring a structural polarity. Microtubules usually have 13 protofilaments but different protofilament numbers can be found in some organisms and specialized cells. The cofactor is Mg(2+). Some glutamate residues at the C-terminus are polyglycylated, resulting in polyglycine chains on the gamma-carboxyl group. Glycylation is mainly limited to tubulin incorporated into axonemes (cilia and flagella) whereas glutamylation is prevalent in neuronal cells, centrioles, axonemes, and the mitotic spindle. Both modifications can coexist on the same protein on adjacent residues, and lowering polyglycylation levels increases polyglutamylation, and reciprocally. Cilia and flagella glycylation is required for their stability and maintenance. Flagella glycylation controls sperm motility. In terms of processing, some glutamate residues at the C-terminus are polyglutamylated, resulting in polyglutamate chains on the gamma-carboxyl group. Polyglutamylation plays a key role in microtubule severing by spastin (SPAST). SPAST preferentially recognizes and acts on microtubules decorated with short polyglutamate tails: severing activity by SPAST increases as the number of glutamates per tubulin rises from one to eight, but decreases beyond this glutamylation threshold. Glutamylation is also involved in cilia motility. Post-translationally, acetylation of alpha chains at Lys-40 is located inside the microtubule lumen. This modification has been correlated with increased microtubule stability, intracellular transport and ciliary assembly. Methylation of alpha chains at Lys-40 is found in mitotic microtubules and is required for normal mitosis and cytokinesis contributing to genomic stability. In terms of processing, nitration of Tyr-449 is irreversible and interferes with normal dynein intracellular distribution. Post-translationally, undergoes a tyrosination/detyrosination cycle, the cyclic removal and re-addition of a C-terminal tyrosine residue by the enzymes tubulin tyrosine carboxypeptidase (MATCAP1, VASH1 or VASH2) and tubulin tyrosine ligase (TTL), respectively. Tyrosination promotes microtubule interaction with CAP-Gly domain-containing proteins such as CLIP1, CLIP2 and DCTN1. Tyrosination regulates the initiation of dynein-dynactin motility via interaction with DCTN1, which brings the dynein-dynactin complex into contact with microtubules. In neurons, tyrosinated tubulins mediate the initiation of retrograde vesicle transport. In terms of processing, detyrosination is involved in metaphase plate congression by guiding chromosomes during mitosis: detyrosination promotes interaction with CENPE, promoting pole-proximal transport of chromosomes toward the equator. Detyrosination increases microtubules-dependent mechanotransduction in dystrophic cardiac and skeletal muscle. In cardiomyocytes, detyrosinated microtubules are required to resist to contractile compression during contraction: detyrosination promotes association with desmin (DES) at force-generating sarcomeres, leading to buckled microtubules and mechanical resistance to contraction.

It localises to the cytoplasm. The protein resides in the cytoskeleton. The enzyme catalyses GTP + H2O = GDP + phosphate + H(+). Its function is as follows. Tubulin is the major constituent of microtubules, a cylinder consisting of laterally associated linear protofilaments composed of alpha- and beta-tubulin heterodimers. Microtubules grow by the addition of GTP-tubulin dimers to the microtubule end, where a stabilizing cap forms. Below the cap, tubulin dimers are in GDP-bound state, owing to GTPase activity of alpha-tubulin. The chain is Tubulin alpha-1C chain (Tuba1c) from Rattus norvegicus (Rat).